Reading from the N-terminus, the 120-residue chain is uncharacterized protein (120 aa).

This is an uncharacterized protein from Allochromatium vinosum (strain ATCC 17899 / DSM 180 / NBRC 103801 / NCIMB 10441 / D) (Chromatium vinosum).